We begin with the raw amino-acid sequence, 502 residues long: Transmembrane prolyl 4-hydroxylase (502 aa).

Residues 1 to 29 (MAAAAVTGQRPETAAAEEASRPQWAPPDH) are disordered. The Cytoplasmic portion of the chain corresponds to 1–60 (MAAAAVTGQRPETAAAEEASRPQWAPPDHCQAQAAAGLGDGEDAPVRPLCKPRGICSRAY). The chain crosses the membrane as a helical; Signal-anchor for type II membrane protein span at residues 61 to 81 (FLVLMVFVHLYLGNVLALLLF). At 82–502 (VHYSNGDESS…RAYRDARVEL (421 aa)) the chain is on the lumenal side. The disordered stretch occupies residues 89–111 (ESSDPGPQHRAQGPGPEPTLGPL). 2 consecutive EF-hand domains span residues 185-220 (TMQV…GNGW) and 224-259 (PESI…DFHK). 9 residues coordinate Ca(2+): aspartate 198, asparagine 200, aspartate 202, histidine 204, glutamate 209, aspartate 237, aspartate 239, aspartate 241, and glutamate 248. The 151-residue stretch at 310 to 460 (LSEPLQVVRY…KWIANNWINV (151 aa)) folds into the Fe2OG dioxygenase domain. Fe cation is bound by residues histidine 328 and aspartate 330. Asparagine 348 and asparagine 368 each carry an N-linked (GlcNAc...) asparagine glycan. Glutamate 374 contacts Fe cation. N-linked (GlcNAc...) asparagine glycosylation occurs at asparagine 382. Lysine 451 contacts 2-oxoglutarate.

In terms of assembly, homodimer. Requires Fe(2+) as cofactor. It depends on L-ascorbate as a cofactor. Post-translationally, glycosylated. As to expression, widely expressed with highest levels in adult pancreas, heart, skeletal muscle, brain, placenta, kidney and adrenal gland. Expressed at lower levels in epiphyseal cartilage and in fibroblasts.

It localises to the endoplasmic reticulum membrane. It catalyses the reaction L-prolyl-[hypoxia-inducible factor alpha subunit] + 2-oxoglutarate + O2 = trans-4-hydroxy-L-prolyl-[hypoxia-inducible factor alpha subunit] + succinate + CO2. Functionally, catalyzes the post-translational formation of 4-hydroxyproline in hypoxia-inducible factor (HIF) alpha proteins. Hydroxylates HIF1A at 'Pro-402' and 'Pro-564'. May function as a cellular oxygen sensor and, under normoxic conditions, may target HIF through the hydroxylation for proteasomal degradation via the von Hippel-Lindau ubiquitination complex. This chain is Transmembrane prolyl 4-hydroxylase (P4HTM), found in Homo sapiens (Human).